Consider the following 249-residue polypeptide: tRNA (guanine-N(7)-)-methyltransferase (249 aa).

Positions 80, 105, 132, and 155 each coordinate S-adenosyl-L-methionine. Residue Asp-155 is part of the active site. Residues Lys-159, Asp-191, and 228 to 231 (TKFE) contribute to the substrate site.

This sequence belongs to the class I-like SAM-binding methyltransferase superfamily. TrmB family.

It carries out the reaction guanosine(46) in tRNA + S-adenosyl-L-methionine = N(7)-methylguanosine(46) in tRNA + S-adenosyl-L-homocysteine. Its pathway is tRNA modification; N(7)-methylguanine-tRNA biosynthesis. Its function is as follows. Catalyzes the formation of N(7)-methylguanine at position 46 (m7G46) in tRNA. This is tRNA (guanine-N(7)-)-methyltransferase from Mannheimia succiniciproducens (strain KCTC 0769BP / MBEL55E).